The following is a 307-amino-acid chain: 4-hydroxythreonine-4-phosphate dehydrogenase (307 aa).

2 residues coordinate substrate: His126 and Thr127. Residues His156, His195, and His251 each contribute to the a divalent metal cation site. Residues Lys259, Asn268, and Arg277 each coordinate substrate.

The protein belongs to the PdxA family. As to quaternary structure, homodimer. The cofactor is Zn(2+). Mg(2+) serves as cofactor. It depends on Co(2+) as a cofactor.

The protein resides in the cytoplasm. It catalyses the reaction 4-(phosphooxy)-L-threonine + NAD(+) = 3-amino-2-oxopropyl phosphate + CO2 + NADH. It functions in the pathway cofactor biosynthesis; pyridoxine 5'-phosphate biosynthesis; pyridoxine 5'-phosphate from D-erythrose 4-phosphate: step 4/5. Functionally, catalyzes the NAD(P)-dependent oxidation of 4-(phosphooxy)-L-threonine (HTP) into 2-amino-3-oxo-4-(phosphooxy)butyric acid which spontaneously decarboxylates to form 3-amino-2-oxopropyl phosphate (AHAP). This is 4-hydroxythreonine-4-phosphate dehydrogenase from Helicobacter pylori (strain P12).